Reading from the N-terminus, the 959-residue chain is Oxysterol-binding protein-related protein 6 (959 aa).

The disordered stretch occupies residues 1 to 60 (MSSDEKGISPAHKTSTPTHRSASSSTSSQRESRQSIHVLERTASSSTEPSVSRQLLEPEP). Ser2 carries the N-acetylserine modification. The span at 14 to 29 (TSTPTHRSASSSTSSQ) shows a compositional bias: low complexity. The segment covering 30 to 40 (RESRQSIHVLE) has biased composition (basic and acidic residues). Phosphoserine is present on Ser35. The segment covering 42–53 (TASSSTEPSVSR) has biased composition (polar residues). Positions 86 to 181 (PDRHEGFMLK…WVSKLRHHRL (96 aa)) constitute a PH domain. Residues Ser190 and Ser290 each carry the phosphoserine modification.

This sequence belongs to the OSBP family. In terms of assembly, homodimer. Interacts with OSBPL3. As to expression, expressed in skin, respiratory epithelium, small intestine epithelium, pancreas, striated muscle, brain, spinal ganglia, and nervous plexus of the intestine (at protein level). In the brain, specifically in the cerebellum, it is expressed in Purkinje and granule cells. Expressed in hepatocytes and macrophages.

It is found in the nucleus envelope. It localises to the cytoplasm. The protein localises to the cytosol. Its subcellular location is the endoplasmic reticulum membrane. The protein resides in the cell membrane. It is found in the endosome membrane. Functionally, regulates cellular transport and efflux of cholesterol. Plays a role in phosphatidylinositol-4-phophate (PI4P) turnover at the neuronal membrane. Binds via its PH domain PI4P, phosphatidylinositol-4,5-diphosphate, phosphatidylinositol-3,4,5-triphosphate, and phosphatidic acid. Weakly binds 25-hydroxycholesterol. This is Oxysterol-binding protein-related protein 6 (Osbpl6) from Mus musculus (Mouse).